The chain runs to 496 residues: Probable cytosol aminopeptidase (496 aa).

Residues K266 and D271 each contribute to the Mn(2+) site. K278 is a catalytic residue. Positions 289, 348, and 350 each coordinate Mn(2+). R352 is an active-site residue.

Belongs to the peptidase M17 family. The cofactor is Mn(2+).

It is found in the cytoplasm. The catalysed reaction is Release of an N-terminal amino acid, Xaa-|-Yaa-, in which Xaa is preferably Leu, but may be other amino acids including Pro although not Arg or Lys, and Yaa may be Pro. Amino acid amides and methyl esters are also readily hydrolyzed, but rates on arylamides are exceedingly low.. It catalyses the reaction Release of an N-terminal amino acid, preferentially leucine, but not glutamic or aspartic acids.. Presumably involved in the processing and regular turnover of intracellular proteins. Catalyzes the removal of unsubstituted N-terminal amino acids from various peptides. The sequence is that of Probable cytosol aminopeptidase from Pseudomonas syringae pv. tomato (strain ATCC BAA-871 / DC3000).